The chain runs to 431 residues: STE20-related kinase adapter protein alpha (431 aa).

Phosphoserine occurs at positions 2 and 46. Positions 69 to 379 (YELLTVIGKG…ASTLLNHSFF (311 aa)) constitute a Protein kinase domain. The disordered stretch occupies residues 310 to 347 (LTMSPSRSVANSGLSDSLTTSTPRPSNGDSPSHPYHRT). Residues 312–339 (MSPSRSVANSGLSDSLTTSTPRPSNGDS) show a composition bias toward polar residues. Phosphothreonine; by LKB1 is present on residues threonine 329 and threonine 419.

This sequence belongs to the protein kinase superfamily. STE Ser/Thr protein kinase family. STE20 subfamily. Component of a trimeric complex composed of STK11/LKB1, STRAD (STRADA or STRADB) and CAB39/MO25 (CAB39/MO25alpha or CAB39L/MO25beta): the complex tethers STK11/LKB1 in the cytoplasm and stimulates its catalytic activity.

The protein resides in the nucleus. It localises to the cytoplasm. Functionally, pseudokinase which, in complex with CAB39/MO25 (CAB39/MO25alpha or CAB39L/MO25beta), binds to and activates STK11/LKB1. Adopts a closed conformation typical of active protein kinases and binds STK11/LKB1 as a pseudosubstrate, promoting conformational change of STK11/LKB1 in an active conformation. The sequence is that of STE20-related kinase adapter protein alpha (STRADA) from Homo sapiens (Human).